The sequence spans 314 residues: DNA-directed RNA polymerase subunit alpha (314 aa).

The alpha N-terminal domain (alpha-NTD) stretch occupies residues Met-1 to Thr-228. Residues Lys-245 to Asp-314 are alpha C-terminal domain (alpha-CTD).

Belongs to the RNA polymerase alpha chain family. In terms of assembly, homodimer. The RNAP catalytic core consists of 2 alpha, 1 beta, 1 beta' and 1 omega subunit. When a sigma factor is associated with the core the holoenzyme is formed, which can initiate transcription.

It catalyses the reaction RNA(n) + a ribonucleoside 5'-triphosphate = RNA(n+1) + diphosphate. DNA-dependent RNA polymerase catalyzes the transcription of DNA into RNA using the four ribonucleoside triphosphates as substrates. This chain is DNA-directed RNA polymerase subunit alpha, found in Bacillus thuringiensis (strain Al Hakam).